We begin with the raw amino-acid sequence, 236 residues long: Small ribosomal subunit protein uS2c (236 aa).

It belongs to the universal ribosomal protein uS2 family.

Its subcellular location is the plastid. It is found in the chloroplast. The sequence is that of Small ribosomal subunit protein uS2c (rps2) from Zea mays (Maize).